A 612-amino-acid chain; its full sequence is tRNA 5-methylaminomethyl-2-thiouridine biosynthesis bifunctional protein MnmC (612 aa).

Residues Met1 to Glu218 form a tRNA (mnm(5)s(2)U34)-methyltransferase region. Residues Ile244–Arg612 form an FAD-dependent cmnm(5)s(2)U34 oxidoreductase region.

In the N-terminal section; belongs to the methyltransferase superfamily. tRNA (mnm(5)s(2)U34)-methyltransferase family. The protein in the C-terminal section; belongs to the DAO family. The cofactor is FAD.

It is found in the cytoplasm. It carries out the reaction 5-aminomethyl-2-thiouridine(34) in tRNA + S-adenosyl-L-methionine = 5-methylaminomethyl-2-thiouridine(34) in tRNA + S-adenosyl-L-homocysteine + H(+). In terms of biological role, catalyzes the last two steps in the biosynthesis of 5-methylaminomethyl-2-thiouridine (mnm(5)s(2)U) at the wobble position (U34) in tRNA. Catalyzes the FAD-dependent demodification of cmnm(5)s(2)U34 to nm(5)s(2)U34, followed by the transfer of a methyl group from S-adenosyl-L-methionine to nm(5)s(2)U34, to form mnm(5)s(2)U34. This is tRNA 5-methylaminomethyl-2-thiouridine biosynthesis bifunctional protein MnmC from Campylobacter fetus subsp. fetus (strain 82-40).